A 404-amino-acid chain; its full sequence is Sialidase (404 aa).

Residues 1–27 form the signal peptide; that stretch reads MKKFIKILKVLSMAIVLSACNINGIFA. Arg55 contributes to the substrate binding site. Residue Asp80 is the Proton acceptor of the active site. 3 BNR repeats span residues 89–100, 158–169, and 226–237; these read AKSTDNGQTWDY, VYSDDNGETWSD, and IYSKDNGETWTM. Arg263 contributes to the substrate binding site. The stretch at 273 to 284 is one BNR 4 repeat; that stretch reads YISYDMGSTWEV. The active-site Nucleophile is the Tyr365.

Belongs to the glycosyl hydrolase 33 family. Post-translationally, it is possible that the sialidase is cleaved in front of a cysteine within the leader peptide, forming a glyceride thioether bond which links the protein to the membrane. A second proteolytic cleavage releases the mature extracellular protein.

Its subcellular location is the secreted. It carries out the reaction Hydrolysis of alpha-(2-&gt;3)-, alpha-(2-&gt;6)-, alpha-(2-&gt;8)- glycosidic linkages of terminal sialic acid residues in oligosaccharides, glycoproteins, glycolipids, colominic acid and synthetic substrates.. Functionally, sialidases have been suggested to be pathogenic factors in microbial infections. In Paraclostridium sordellii (Clostridium sordellii), this protein is Sialidase.